A 140-amino-acid chain; its full sequence is Protein NrdI (140 aa).

Belongs to the NrdI family.

Its function is as follows. Probably involved in ribonucleotide reductase function. This is Protein NrdI from Photorhabdus laumondii subsp. laumondii (strain DSM 15139 / CIP 105565 / TT01) (Photorhabdus luminescens subsp. laumondii).